Here is a 365-residue protein sequence, read N- to C-terminus: MGGGGDGELSPAEARLAMMELANMISVPMALTAVIRLGVPAKLWAGGANAPLAAADLLPAGHPDPSVLERLLRLLASRGVFSEHTGSSSPSPRRFSLTAVGRTLVPGGGGSPSGSGASYADYVLQHHQDALVRAWPLLHEAVLDPSGPEPFARANAGVPAYAYYGKDREANEVMLRAMTGVSEPFMEALLEGYGDGGFEGVSTLVDVGGSSGACLEMIMRRVRTIRDGVNFDLPDVVAAAPPIPGVRHVGGDMFKSIPSGDAIFMKWVLTTWTNEECTAILSNCHKALPGGGKVIACEPVVPDTTDGSTRTRALLENDIFVMATYRTQGRERSEEEFRHLGLAAGFASFRAIYLDPFYAVLEYTK.

Position 232 (Asp232) interacts with S-adenosyl-L-methionine.

The protein belongs to the class I-like SAM-binding methyltransferase superfamily. Cation-independent O-methyltransferase family.

The catalysed reaction is nicotinate + S-adenosyl-L-methionine = N-methylnicotinate + S-adenosyl-L-homocysteine. Involved in nicotinate detoxification in planta. Catalyzes the conversion of nicotinate to N-methylnicotinate, which is a detoxified form of endogenous nicotinate in planta. This Oryza sativa subsp. japonica (Rice) protein is Nicotinate N-methyltransferase 1.